The primary structure comprises 75 residues: Pi-hexatoxin-Hi1d (75 aa).

6 cysteine pairs are disulfide-bonded: C3–C18, C10–C23, C17–C33, C40–C55, C47–C60, and C54–C71. 2 Domain repeats span residues 3–33 and 40–71; these read CIRKWLSCVDRKNDCCEGLECYKRRHSFEVC and CLVKWKQCDGRERDCCAGLECWKRSGNKSSVC. Residues 3-71 are 2 X approximate repeats with cysteine pattern C-C-CC-C-C; it reads CIRKWLSCVD…KRSGNKSSVC (69 aa).

The protein belongs to the psalmotoxin-1 family. Double-knot toxin subfamily. In terms of tissue distribution, expressed by the venom gland.

It is found in the secreted. Its function is as follows. This toxin potently and selectively inhibits ASIC1a, an isoform of the gene ASIC1. It incompletely inhibits ASIC1a activation in a pH-independent and slowly reversible manner. This toxin acts by binding to and stabilizing the closed state of the channel, thereby impeding the transition into a conducting state. This toxin may bind to the acidic pocket of ASIC1a, since mutation of a key residue of this pocket (Arg-350) abolishes the ability of the toxin to inhibit ASIC1a. In vivo, this toxin protects the brain from neuronal injury when administered up to 8 hours after stroke onset. The polypeptide is Pi-hexatoxin-Hi1d (Hadronyche infensa (Fraser island funnel-web spider)).